The sequence spans 142 residues: HTH-type transcriptional regulator MntR (142 aa).

One can recognise an HTH dtxR-type domain in the interval 1–63 (MPTPSMEDYI…YEKYRGLVLT (63 aa)). Mn(2+) is bound by residues aspartate 8, glutamate 11, histidine 77, glutamate 99, glutamate 102, and histidine 103.

The protein belongs to the DtxR/MntR family. In terms of assembly, homodimer.

Its subcellular location is the cytoplasm. DNA binding is strongly activated by Mn(2+). Central regulator of manganese homeostasis. This is HTH-type transcriptional regulator MntR from Bacillus cereus (strain B4264).